Here is a 436-residue protein sequence, read N- to C-terminus: 3-ketoacyl-CoA thiolase (436 aa).

The active-site Acyl-thioester intermediate is Cys99. Residues His392 and Cys422 each act as proton acceptor in the active site.

It belongs to the thiolase-like superfamily. Thiolase family. In terms of assembly, heterotetramer of two alpha chains (FadJ) and two beta chains (FadI).

Its subcellular location is the cytoplasm. It carries out the reaction an acyl-CoA + acetyl-CoA = a 3-oxoacyl-CoA + CoA. It participates in lipid metabolism; fatty acid beta-oxidation. Its function is as follows. Catalyzes the final step of fatty acid oxidation in which acetyl-CoA is released and the CoA ester of a fatty acid two carbons shorter is formed. In Yersinia pestis bv. Antiqua (strain Angola), this protein is 3-ketoacyl-CoA thiolase.